A 483-amino-acid polypeptide reads, in one-letter code: Pre-glycoprotein polyprotein GP complex (483 aa).

Residue Gly2 is the site of N-myristoyl glycine; by host attachment. Over Gly2 to Glu17 the chain is Extracellular. A helical membrane pass occupies residues Ala18–Val32. A topological domain (cytoplasmic) is located at residue Lys33. Residues Gly34–Ala53 traverse the membrane as a helical segment. Extracellular segments lie at residues Gly54–Ser58 and Glu59–Asp422. Cys57 contributes to the Zn(2+) binding site. 2 N-linked (GlcNAc...) asparagine; by host glycosylation sites follow: Asn83 and Asn95. 6 cysteine pairs are disulfide-bonded: Cys92–Cys224, Cys134–Cys162, Cys205–Cys211, Cys269–Cys282, Cys291–Cys300, and Cys354–Cys375. N-linked (GlcNAc...) asparagine; by host glycans are attached at residues Asn164 and Asn176. N-linked (GlcNAc...) asparagine; by host glycosylation is found at Asn355, Asn363, Asn380, and Asn385. The helical transmembrane segment at Ile423 to Pro443 threads the bilayer. The Cytoplasmic portion of the chain corresponds to Thr444–His483. His445, His447, Cys453, His457, Cys465, Cys467, and His483 together coordinate Zn(2+).

The protein belongs to the arenaviridae GPC protein family. Homotetramer; disulfide-linked. In terms of assembly, homotetramer. GP2 homotetramers bind through ionic interactions with GP1 homotetramers to form the GP complex together with the stable signal peptide. The GP-C polyprotein interacts with the host protease MBTPS1/SKI-1 resulting in the polyprotein processing. In terms of processing, specific enzymatic cleavages in vivo yield mature proteins. GP-C polyprotein is cleaved in the endoplasmic reticulum by the host protease MBTPS1. Only cleaved glycoprotein is incorporated into virions. The SSP remains stably associated with the GP complex following cleavage by signal peptidase and plays crucial roles in the trafficking of GP through the secretory pathway. Post-translationally, myristoylation is necessary for GP2-mediated fusion activity.

It is found in the virion membrane. Its subcellular location is the host endoplasmic reticulum membrane. It localises to the host Golgi apparatus membrane. The protein localises to the host cell membrane. Functionally, class I viral fusion protein that directs fusion of viral and host endosomal membranes, leading to delivery of the nucleocapsid into the cytoplasm. Membrane fusion is mediated by irreversible conformational changes induced upon acidification in the endosome. Its function is as follows. Stable signal peptide (SSP): cleaved and functions as a signal peptide. In addition, it is also retained as the third component of the GP complex. The SSP is required for efficient glycoprotein expression, post-translational maturation cleavage of GP1 and GP2, glycoprotein transport to the cell surface plasma membrane, formation of infectious virus particles, and acid pH-dependent glycoprotein-mediated cell fusion. In terms of biological role, interacts with the host receptor. The protein is Pre-glycoprotein polyprotein GP complex of Artibeus (neotropical fruit bats).